The sequence spans 233 residues: Cell surface glycoprotein gp42 (233 aa).

Residues M1–A16 form the signal peptide. Ig-like domains lie at P23–Q98 and P115–S195. 3 N-linked (GlcNAc...) asparagine glycosylation sites follow: N29, N66, and N181. 2 disulfide bridges follow: C40–C88 and C136–C184. G206 is lipidated: GPI-anchor amidated glycine. The propeptide at T207–F233 is removed in mature form.

In terms of tissue distribution, NK cells.

It localises to the cell membrane. The chain is Cell surface glycoprotein gp42 from Rattus norvegicus (Rat).